The chain runs to 316 residues: Na(+)/H(+) exchange regulatory cofactor NHE-RF2 (316 aa).

Positions 11 to 91 constitute a PDZ 1 domain; sequence LCRLVRGEQG…ETRLLVVDKE (81 aa). A disordered region spans residues 109–148; sequence QRGLPPAHDPWEPKPDWARAGSLSSDAGQKDVNGPPRELR. A phosphoserine mark is found at S130, S183, and S254. A PDZ 2 domain is found at 151-231; that stretch reads LCHLRKGPQG…EARLLLVDPE (81 aa). Residues 244-303 form a disordered region; it reads TEEHVEGPLPSPITNGTSPAQDASAWKRDPFQESGLHLSPTAAEAKEKARATRVNKRAPQ. Over residues 255 to 264 the composition is skewed to polar residues; that stretch reads PITNGTSPAQ. S282 carries the phosphoserine modification.

Homodimer, and heterodimer with NHERF1. Binds ADRB2, SLC9A3, P2RY1, P2YR2, SRY, RDX, PDZK1 and LPAR2. Found in a complex with EZR, PODXL and NHERF2. Interacts (via the PDZ domains) with PODXL (via the C-terminal PDZ-binding motif DTHL); interaction is detected in glomerular epithelium cells. Binds PODXL. Interacts with SGK1 and KCNJ1/ROMK1. Interacts (via the PDZ domains) with SLC26A6. Detected in kidney glomeruli.

It localises to the endomembrane system. The protein resides in the nucleus. Its subcellular location is the apical cell membrane. Scaffold protein that connects plasma membrane proteins with members of the ezrin/moesin/radixin family and thereby helps to link them to the actin cytoskeleton and to regulate their surface expression. Necessary for cAMP-mediated phosphorylation and inhibition of SLC9A3. May also act as scaffold protein in the nucleus. In Oryctolagus cuniculus (Rabbit), this protein is Na(+)/H(+) exchange regulatory cofactor NHE-RF2 (NHERF2).